We begin with the raw amino-acid sequence, 684 residues long: Zinc finger BED domain-containing protein RICESLEEPER 4 (684 aa).

The BED-type zinc-finger motif lies at 54 to 113 (KRKSAIWEHFTLVDVSDGCKRASCIHCNQSLAYSSGSKNSGTSHLTRHIAEWCRVLKDRQ). Residues C77, C80, H101, and C106 each coordinate Zn(2+). Positions 595 to 680 (ELELYLEEAL…EALLCAKDWL (86 aa)) are HATC (Hobo-Ac-Tam3) domain.

Homodimer.

The protein resides in the nucleus. Functionally, transposase-like protein that is essential for plant growth and development. May regulate global gene expression by recruiting other cellular factors. The sequence is that of Zinc finger BED domain-containing protein RICESLEEPER 4 from Oryza sativa subsp. japonica (Rice).